Here is a 249-residue protein sequence, read N- to C-terminus: General transcription factor IIF subunit 2 (249 aa).

A2 is modified (N-acetylalanine). Residues K22, K33, and K137 each carry the N6-acetyllysine modification. S142 is subject to Phosphoserine. DNA contacts are provided by G227 and H229. S248 bears the Phosphoserine mark.

It belongs to the TFIIF beta subunit family. As to quaternary structure, heterodimer of an alpha and a beta subunit. Interacts with HTATSF1 and GPBP1. Interacts with URI1. Interacts with GTF2B (via N-terminus); this interaction is inhibited in presence of GTF2F1. Part of TBP-based Pol II pre-initiation complex (PIC), in which Pol II core assembles with general transcription factors and other specific initiation factors including GTF2E1, GTF2E2, GTF2F1, GTF2F2, TCEA1, ERCC2, ERCC3, GTF2H2, GTF2H3, GTF2H4, GTF2H5, GTF2A1, GTF2A2, GTF2B and TBP; this large multi-subunit PIC complex mediates DNA unwinding and targets Pol II core to the transcription start site where the first phosphodiester bond forms.

Its subcellular location is the nucleus. TFIIF is a general transcription initiation factor that binds to RNA polymerase II and helps to recruit it to the initiation complex in collaboration with TFIIB. The chain is General transcription factor IIF subunit 2 (GTF2F2) from Bos taurus (Bovine).